We begin with the raw amino-acid sequence, 874 residues long: Putative disease resistance protein At5g05400 (874 aa).

A coiled-coil region spans residues 22–74 (LSRNQNRFRNLVDHVAALKKTVRQLEARRDDLLKRIKVQEDRGLNLLDEVQQW). The NB-ARC domain maps to 139-434 (AQKGPIPKVE…GQGIILGSKG (296 aa)). Residue 182–189 (GMGGVGKT) participates in ATP binding. LRR repeat units lie at residues 483–505 (QKNV…EDQK), 506–527 (AVRR…LHCP), 528–548 (KLET…EFLS), 552–574 (ILMV…SPLY), 575–597 (SLRF…YALR), 598–620 (NLLY…HDLP), and 621–642 (NLEV…VRQI).

This sequence belongs to the disease resistance NB-LRR family.

In terms of biological role, potential disease resistance protein. This chain is Putative disease resistance protein At5g05400, found in Arabidopsis thaliana (Mouse-ear cress).